The sequence spans 1410 residues: Condensin-1 complex subunit CAP-D2 (1410 aa).

The span at 469–480 (LEPTEHASKEST) shows a compositional bias: basic and acidic residues. Disordered stretches follow at residues 469–492 (LEPT…DGEI), 504–525 (HQDS…EKDV), 860–879 (KTKK…NLEA), and 1208–1410 (KEQE…GSRS). A compositionally biased stretch (polar residues) spans 869–879 (ESQNTEENLEA). Residues 1208–1226 (KEQEETARNAEVHREKTKT) are compositionally biased toward basic and acidic residues. 2 stretches are compositionally biased toward acidic residues: residues 1240-1284 (PVEE…EEPD) and 1306-1319 (IETE…DSEP). A compositionally biased stretch (polar residues) spans 1323-1339 (QCGTTNPRSLNRKTSGD). Positions 1342–1365 (IETESEEEQSDSEEEPSDSEEEPD) are enriched in acidic residues. Positions 1368–1379 (QCGTTNPRSLNQ) are enriched in polar residues.

This sequence belongs to the CND1 (condensin subunit 1) family. In terms of assembly, component of the condensin complex. In terms of tissue distribution, present in buds.

The protein resides in the chromosome. The protein localises to the nucleus. Its function is as follows. Essential protein. Regulatory subunit of the condensin complex, a complex required for conversion of interphase chromatin into mitotic-like condense chromosomes. The condensin complex probably introduces positive supercoils into relaxed DNA in the presence of type I topoisomerases and converts nicked DNA into positive knotted forms in the presence of type II topoisomerases. Required for fertility, growth and euchromatin organization, but not for sister chromatid cohesion. Necessary to maintain normal structural integrity of the meiotic chromosomes during the two nuclear divisions of gametogenesis, especially to maintain compaction of the centromeric repeats and 45S rDNA. Also seems to be involved in crossover formation during meiotic prophase I. Prevents centromeric and pericentromeric heterochromatin repeats association. Contributes to the induction of stress-responsive genes in response to stress treatment. This Arabidopsis thaliana (Mouse-ear cress) protein is Condensin-1 complex subunit CAP-D2.